Consider the following 843-residue polypeptide: Protein P (843 aa).

The interval 1-177 (MPLSYPHFRK…FCGSPYSWEQ (177 aa)) is terminal protein domain (TP). The spacer stretch occupies residues 178–346 (ELQHGSTSIN…YCLSHIINLL (169 aa)). Disordered regions lie at residues 180–221 (QHGS…FQQS) and 282–313 (REKTNPSLSTSKRHSSTGHAVELNPVPPGSVR). Residues 196 to 221 (SLCTQSSGILSRPSAGSSIQGKFQQS) are compositionally biased toward polar residues. The tract at residues 347–690 (EDWGPCYEHG…YMHLYPVARQ (344 aa)) is polymerase/reverse transcriptase domain (RT). The Reverse transcriptase domain maps to 357–600 (QHHIRTPRTP…YTLNFMGYVI (244 aa)). Mg(2+)-binding residues include aspartate 429, aspartate 551, and aspartate 552.

It belongs to the hepadnaviridae P protein family.

It catalyses the reaction DNA(n) + a 2'-deoxyribonucleoside 5'-triphosphate = DNA(n+1) + diphosphate. The catalysed reaction is Endonucleolytic cleavage to 5'-phosphomonoester.. Activated by host HSP70 and HSP40 in vitro to be able to bind the epsilon loop of the pgRNA. Because deletion of the RNase H region renders the protein partly chaperone-independent, the chaperones may be needed indirectly to relieve occlusion of the RNA-binding site by this domain. Inhibited by several reverse-transcriptase inhibitors: Lamivudine, Adefovir and Entecavir. Multifunctional enzyme that converts the viral RNA genome into dsDNA in viral cytoplasmic capsids. This enzyme displays a DNA polymerase activity that can copy either DNA or RNA templates, and a ribonuclease H (RNase H) activity that cleaves the RNA strand of RNA-DNA heteroduplexes in a partially processive 3'- to 5'-endonucleasic mode. Neo-synthesized pregenomic RNA (pgRNA) are encapsidated together with the P protein, and reverse-transcribed inside the nucleocapsid. Initiation of reverse-transcription occurs first by binding the epsilon loop on the pgRNA genome, and is initiated by protein priming, thereby the 5'-end of (-)DNA is covalently linked to P protein. Partial (+)DNA is synthesized from the (-)DNA template and generates the relaxed circular DNA (RC-DNA) genome. After budding and infection, the RC-DNA migrates in the nucleus, and is converted into a plasmid-like covalently closed circular DNA (cccDNA). The activity of P protein does not seem to be necessary for cccDNA generation, and is presumably released from (+)DNA by host nuclear DNA repair machinery. In Homo sapiens (Human), this protein is Protein P.